The sequence spans 178 residues: MSDISCKKRDDYLEWPEYFMAVAFLSAQRSKDPSSQVGACIVNTENKIVGIGYNGMPNGCSDDLLPWRRTAENKLDTKYPYVCHAELNAIMNKNSADVKGCSMYVALFPCNECAKLIIQAGIKEVIFMSDKYHDSEETTAARLLFKLAGVTFRKFTPKYSKIVIDFDSINSRPSQKPQ.

Residues 14–145 (EWPEYFMAVA…EETTAARLLF (132 aa)) form the CMP/dCMP-type deaminase domain. H84 contributes to the Zn(2+) binding site. E86 functions as the Proton donor in the catalytic mechanism. The Zn(2+) site is built by C110 and C113. A Phosphoserine modification is found at S174.

Belongs to the cytidine and deoxycytidylate deaminase family. Homohexamer. It depends on Zn(2+) as a cofactor.

The enzyme catalyses dCMP + H2O + H(+) = dUMP + NH4(+). It carries out the reaction 5-hydroxymethyl-dCMP + H2O + H(+) = 5-hydroxymethyl-dUMP + NH4(+). Its activity is regulated as follows. Allosteric enzyme whose activity is greatly influenced by the end products of its metabolic pathway, dCTP and dTTP. In terms of biological role, catalyzes the deamination of dCMP to dUMP, providing the nucleoside monophosphate substrate for the thymidylate synthase/TYMS. Also, part of a nucleotide salvage pathway that eliminates epigenetically modified 5-hydroxymethyl-dCMP (hmdCMP) in a two-step process entailing deamination to cytotoxic 5-hydroxymethyl-dUMP (hmdUMP), followed by its hydrolysis into 5-hydroxymethyluracil (hmU) and 2-deoxy-D-ribose 5-phosphate (deoxyribosephosphate). Catalyzes the first step in that pathway, the deamination of 5-hydroxymethyl-dCMP (hmdCMP). This chain is Deoxycytidylate deaminase, found in Mus musculus (Mouse).